We begin with the raw amino-acid sequence, 261 residues long: Non-structural protein 2a (261 aa).

This sequence belongs to the coronaviruses ns2a protein family.

Its subcellular location is the host cytoplasm. Functionally, not essential for virus replication in transformed murine cells. This Mus musculus (Mouse) protein is Non-structural protein 2a.